Here is a 388-residue protein sequence, read N- to C-terminus: Branched-chain-amino-acid aminotransferase 2, chloroplastic (388 aa).

The transit peptide at Met-1 to Thr-22 directs the protein to the chloroplast. Lys-235 carries the post-translational modification N6-(pyridoxal phosphate)lysine.

Belongs to the class-IV pyridoxal-phosphate-dependent aminotransferase family. It depends on pyridoxal 5'-phosphate as a cofactor.

The protein localises to the plastid. It is found in the chloroplast. It carries out the reaction L-leucine + 2-oxoglutarate = 4-methyl-2-oxopentanoate + L-glutamate. The catalysed reaction is L-isoleucine + 2-oxoglutarate = (S)-3-methyl-2-oxopentanoate + L-glutamate. The enzyme catalyses L-valine + 2-oxoglutarate = 3-methyl-2-oxobutanoate + L-glutamate. The protein operates within amino-acid biosynthesis; L-isoleucine biosynthesis; L-isoleucine from 2-oxobutanoate: step 4/4. Its pathway is amino-acid biosynthesis; L-leucine biosynthesis; L-leucine from 3-methyl-2-oxobutanoate: step 4/4. It functions in the pathway amino-acid biosynthesis; L-valine biosynthesis; L-valine from pyruvate: step 4/4. Converts 2-oxo acids to branched-chain amino acids. Shows activity with L-Leu, L-Ile and L-Val as amino donors and 2-oxoglutarate as an amino acceptor, but no activity for D-isomers of Leu, Ile, Val, Asp, Glu or Ala. This is Branched-chain-amino-acid aminotransferase 2, chloroplastic (BCAT2) from Arabidopsis thaliana (Mouse-ear cress).